The following is a 76-amino-acid chain: UPF0154 protein Exig_1099 (76 aa).

The helical transmembrane segment at 4 to 24 threads the bilayer; that stretch reads WIWILIALLCLVAGVALGFYI. Positions 54–76 are disordered; the sequence is KPSQKKVNQVMRSMSGSMKSPKK.

This sequence belongs to the UPF0154 family.

The protein resides in the cell membrane. In Exiguobacterium sibiricum (strain DSM 17290 / CCUG 55495 / CIP 109462 / JCM 13490 / 255-15), this protein is UPF0154 protein Exig_1099.